A 158-amino-acid polypeptide reads, in one-letter code: MALEAAKALQQLRTGDLNAFNFVYISGEGATSNPGPFTPLFGRVKGETETGLMKIQSKVANFRLFIVRPSHVDSKGHKAIAPYIPQPTVLLRAANLALGPALRGFLKPYNSPTAPLGEFLVDLATGAQQGRLHGDGVECRGASTIISNVGFRRLMGLS.

It participates in polyketide biosynthesis. Functionally, part of the gene cluster B that mediates the biosynthesis of botcinic acid and its botcinin derivatives, acetate-derived polyketides that contribute to virulence when combined with the sesquiterpene botrydial. Botcinic acid and its derivatives have been shown to induce chlorosis and necrosis during host plant infection, but also have antifungal activities. Two polyketide synthases, BOA6 and BOA9, are involved in the biosynthesis of botcinins. BOA6 mediates the formation of the per-methylated tetraketide core by condensation of four units of malonyl-CoA with one unit of acetyl-CoA, which would be methylated in activated methylene groups to yield a bicyclic acid intermediate that could then either be converted to botrylactone derivatives or lose the starter acetate unit through a retro-Claisen type C-C bond cleavage to yield botcinin derivatives. The second polyketide synthase, BOA9, is probably required for the biosynthesis of the tetraketide side chain of botcinins. The methyltransferase (MT) domain within BOA6 is probably responsible for the incorporation of four methyl groups. The trans-enoyl reductase BOA5 might take over the enoyl reductase function of BOA6 that misses an ER domain. The monooxygenases BOA2, BOA3 and BOA4 might be involved in further hydroxylations at C4, C5 and C8, whereas BOA7, close to BOA9, could potentially be involved in the hydroxylation at C4 in the side chain of botcinins. In Botryotinia fuckeliana (strain B05.10) (Noble rot fungus), this protein is Botcinic acid biosynthesis cluster B protein 16.